The primary structure comprises 481 residues: Aspartyl/glutamyl-tRNA(Asn/Gln) amidotransferase subunit B (481 aa).

The protein belongs to the GatB/GatE family. GatB subfamily. As to quaternary structure, heterotrimer of A, B and C subunits.

The catalysed reaction is L-glutamyl-tRNA(Gln) + L-glutamine + ATP + H2O = L-glutaminyl-tRNA(Gln) + L-glutamate + ADP + phosphate + H(+). The enzyme catalyses L-aspartyl-tRNA(Asn) + L-glutamine + ATP + H2O = L-asparaginyl-tRNA(Asn) + L-glutamate + ADP + phosphate + 2 H(+). Functionally, allows the formation of correctly charged Asn-tRNA(Asn) or Gln-tRNA(Gln) through the transamidation of misacylated Asp-tRNA(Asn) or Glu-tRNA(Gln) in organisms which lack either or both of asparaginyl-tRNA or glutaminyl-tRNA synthetases. The reaction takes place in the presence of glutamine and ATP through an activated phospho-Asp-tRNA(Asn) or phospho-Glu-tRNA(Gln). The sequence is that of Aspartyl/glutamyl-tRNA(Asn/Gln) amidotransferase subunit B from Fusobacterium nucleatum subsp. nucleatum (strain ATCC 25586 / DSM 15643 / BCRC 10681 / CIP 101130 / JCM 8532 / KCTC 2640 / LMG 13131 / VPI 4355).